Consider the following 240-residue polypeptide: Adapter protein MecA (240 aa).

The protein belongs to the MecA family. As to quaternary structure, homodimer.

Functionally, enables the recognition and targeting of unfolded and aggregated proteins to the ClpC protease or to other proteins involved in proteolysis. This is Adapter protein MecA from Streptococcus mutans serotype c (strain ATCC 700610 / UA159).